We begin with the raw amino-acid sequence, 883 residues long: Leucine--tRNA ligase (883 aa).

Positions 43 to 53 match the 'HIGH' region motif; that stretch reads PYPSGRIHIGH. Residues 630 to 634 carry the 'KMSKS' region motif; the sequence is KMSKS. Lysine 633 contacts ATP.

Belongs to the class-I aminoacyl-tRNA synthetase family.

The protein resides in the cytoplasm. The catalysed reaction is tRNA(Leu) + L-leucine + ATP = L-leucyl-tRNA(Leu) + AMP + diphosphate. The chain is Leucine--tRNA ligase from Nitrobacter winogradskyi (strain ATCC 25391 / DSM 10237 / CIP 104748 / NCIMB 11846 / Nb-255).